The sequence spans 730 residues: Elongation factor 2 (730 aa).

A tr-type G domain is found at 19–228 (TKIRNIGIVA…TGVSFKDVYD (210 aa)). GTP contacts are provided by residues 28–35 (AHIDHGKT), 94–98 (DTPGH), and 148–151 (NKVD). H596 is subject to Diphthamide.

The protein belongs to the TRAFAC class translation factor GTPase superfamily. Classic translation factor GTPase family. EF-G/EF-2 subfamily.

Its subcellular location is the cytoplasm. In terms of biological role, catalyzes the GTP-dependent ribosomal translocation step during translation elongation. During this step, the ribosome changes from the pre-translocational (PRE) to the post-translocational (POST) state as the newly formed A-site-bound peptidyl-tRNA and P-site-bound deacylated tRNA move to the P and E sites, respectively. Catalyzes the coordinated movement of the two tRNA molecules, the mRNA and conformational changes in the ribosome. This Methanosarcina barkeri (strain Fusaro / DSM 804) protein is Elongation factor 2.